Reading from the N-terminus, the 566-residue chain is Glucose starvation modulator protein 1 (566 aa).

A DNA-binding region (zn(2)-C6 fungal-type) is located at residues 20–48; that stretch reads CVFCHQKHLQCSNERPCKNCVKRNIAHGC. Disordered regions lie at residues 65 to 93 and 250 to 270; these read PGAV…PMDS and KQAS…NTLS. A compositionally biased stretch (polar residues) spans 83-93; it reads PVSTSVSPMDS. Residues 253–270 show a composition bias toward low complexity; the sequence is SPSPSNTSTSENNTNTLS.

It belongs to the ERT1/acuK family.

It localises to the nucleus. Transcription factor which regulates nonfermentable carbon utilization. The sequence is that of Glucose starvation modulator protein 1 (ZCF23) from Candida albicans (strain SC5314 / ATCC MYA-2876) (Yeast).